A 193-amino-acid chain; its full sequence is Probable thymidylate kinase (193 aa).

7–14 is an ATP binding site; sequence GIDGSGKT.

The protein belongs to the thymidylate kinase family.

The catalysed reaction is dTMP + ATP = dTDP + ADP. In Pyrobaculum calidifontis (strain DSM 21063 / JCM 11548 / VA1), this protein is Probable thymidylate kinase.